Consider the following 237-residue polypeptide: Bax inhibitor 1 (237 aa).

The Cytoplasmic portion of the chain corresponds to 1-29; the sequence is MNIFDRKINFDALLKFSHITPSTQQHLKK. A Glycyl lysine isopeptide (Lys-Gly) (interchain with G-Cter in ubiquitin) cross-link involves residue Lys7. The helical transmembrane segment at 30-50 threads the bilayer; that stretch reads VYASFALCMFVAAAGAYVHMV. The Lumenal segment spans residues 51–52; that stretch reads TH. Residues 53-73 form a helical membrane-spanning segment; sequence FIQAGLLSALGSLILMIWLMA. Residues 74 to 86 lie on the Cytoplasmic side of the membrane; that stretch reads TPHSHETEQKRLG. Residues 87-107 form a helical membrane-spanning segment; the sequence is LLAGFAFLTGVGLGPALEFCI. The Lumenal segment spans residues 108–112; that stretch reads AVNPS. Residues 113-133 form a helical membrane-spanning segment; the sequence is ILPTAFMGTAMIFTCFTLSAL. Topologically, residues 134 to 139 are cytoplasmic; that stretch reads YARRRS. A helical membrane pass occupies residues 140–160; sequence YLFLGGILMSALSLLLLSSLG. The Lumenal portion of the chain corresponds to 161–166; sequence NVFFGS. Residues 167–187 traverse the membrane as a helical segment; the sequence is IWLFQANLYVGLVVMCGFVLF. Residues 188 to 206 are Cytoplasmic-facing; the sequence is DTQLIIEKAEHGDQDYIWH. An intramembrane region (helical) is located at residues 207–227; that stretch reads CIDLFLDFITVFRKLMMILAM. At 228–237 the chain is on the cytoplasmic side; sequence NEKDKKKEKK.

It belongs to the BI1 family. As to quaternary structure, interacts with BCL2 and BCL2L1. Interacts with ERN1. Post-translationally, ubiquitinated by BFAR, leading to proteasomal degradation. In terms of tissue distribution, highly abundant in testis.

Its subcellular location is the endoplasmic reticulum membrane. Endoplasmic reticulum (ER)-resident protein that confers cellular protection as an anti-apoptotic protein by limiting multiple stress-inducing pathways surrounding the endoplasmic reticulum and mitochondria. Inhibits the activities of the key sensor for the endoplasmic reticulum unfolded protein response IRE1alpha/ERN1 both directly and by blocking BAX/BAK binding. Modulates ER calcium homeostasis by acting as a calcium-leak channel. Negatively regulates autophagy and autophagosome formation, especially during periods of nutrient deprivation, and reduces cell survival during starvation. This chain is Bax inhibitor 1 (TMBIM6), found in Homo sapiens (Human).